The sequence spans 192 residues: Akirin-1 (192 aa).

The interval 17 to 71 (LLSPGSPKRRRCAPLPGPTPGLRPPDAEPPPPFQTQTPPQSLQQPAPPGSERRLP) is disordered. Ser-22 is modified (phosphoserine). Positions 23 to 28 (PKRRRC) match the Nuclear localization signal motif. Residues 31-49 (LPGPTPGLRPPDAEPPPPF) show a composition bias toward pro residues. The segment covering 50-60 (QTQTPPQSLQQ) has biased composition (low complexity). At Thr-72 the chain carries Phosphothreonine. Over residues 104-122 (ASESQPHSSALTAPSSPGS) the composition is skewed to polar residues. Residues 104 to 127 (ASESQPHSSALTAPSSPGSSWMKK) form a disordered region. An SYVS motif motif is present at residues 189–192 (SYVS).

The protein belongs to the akirin family. As to expression, widely expressed with the highest expression in heart, liver, placenta and peripheral blood leukocytes.

The protein localises to the nucleus. Functionally, molecular adapter that acts as a bridge between proteins, and which is involved skeletal muscle development. Functions as a signal transducer for MSTN during skeletal muscle regeneration and myogenesis. May regulate chemotaxis of both macrophages and myoblasts by reorganising actin cytoskeleton, leading to more efficient lamellipodia formation via a PI3 kinase dependent pathway. In contrast to AKIRIN2, not involved in nuclear import of proteasomes. In Homo sapiens (Human), this protein is Akirin-1.